A 277-amino-acid chain; its full sequence is DNA polymerase epsilon subunit C (277 aa).

Polar residues-rich tracts occupy residues 1-16 (MSSPMPQSSLNNSQVA) and 24-39 (ETPSTTPPMISNTNTP). The interval 1–91 (MSSPMPQSSL…EEEEEEESLS (91 aa)) is disordered. The span at 69–89 (ENEDDDEQEEEEEEEEEEEES) shows a compositional bias: acidic residues.

Heterotetramer. Consists of four subunits: POL2, DPB2, DPB3 and DPB4.

It is found in the nucleus. As accessory component of the DNA polymerase epsilon (DNA polymerase II) participates in chromosomal DNA replication. The polypeptide is DNA polymerase epsilon subunit C (DPB3) (Debaryomyces hansenii (strain ATCC 36239 / CBS 767 / BCRC 21394 / JCM 1990 / NBRC 0083 / IGC 2968) (Yeast)).